Consider the following 371-residue polypeptide: Cytochrome b (371 aa).

The next 4 membrane-spanning stretches (helical) occupy residues 25 to 45 (FGSMLLTCSALQVMTGFFLSM), 69 to 90 (WMMQNLHAIGASMFFICIYMHI), 105 to 125 (WLSGTTLLIMLMATAFFGYVL), and 170 to 190 (FFALHFILPFGIISMSSVHIM). Histidine 75 and histidine 89 together coordinate heme b. Residues histidine 174 and histidine 188 each contribute to the heme b site. Histidine 193 contributes to the a ubiquinone binding site. A run of 4 helical transmembrane segments spans residues 218–238 (YKDLLVISMMIITVLLTVSFF), 280–300 (LGGALALVMSIMILLTMPFTH), 312–332 (LMQFMFWTLVATFTVITWTAT), and 339–358 (FTTISQVASIIYFMFFMSNP).

The protein belongs to the cytochrome b family. As to quaternary structure, the cytochrome bc1 complex contains 3 respiratory subunits (MT-CYB, CYC1 and UQCRFS1), 2 core proteins (UQCRC1 and UQCRC2) and probably 6 low-molecular weight proteins. The cofactor is heme b.

The protein resides in the mitochondrion inner membrane. Component of the ubiquinol-cytochrome c reductase complex (complex III or cytochrome b-c1 complex) that is part of the mitochondrial respiratory chain. The b-c1 complex mediates electron transfer from ubiquinol to cytochrome c. Contributes to the generation of a proton gradient across the mitochondrial membrane that is then used for ATP synthesis. The sequence is that of Cytochrome b (MT-CYB) from Candoia carinata (Papuan tree boa).